The chain runs to 194 residues: dCTP deaminase (194 aa).

DCTP-binding positions include 110–115 (RSSLAR), Asp128, 136–138 (VLE), Tyr171, Lys178, and Gln182. Glu138 (proton donor/acceptor) is an active-site residue. The interval 174-194 (RKSSKYKDQQEAVASRISQDK) is disordered.

It belongs to the dCTP deaminase family. As to quaternary structure, homotrimer.

It catalyses the reaction dCTP + H2O + H(+) = dUTP + NH4(+). It participates in pyrimidine metabolism; dUMP biosynthesis; dUMP from dCTP (dUTP route): step 1/2. Catalyzes the deamination of dCTP to dUTP. This chain is dCTP deaminase, found in Shewanella frigidimarina (strain NCIMB 400).